The sequence spans 1156 residues: Mastermind-like protein 2 (1156 aa).

The tract at residues 81–165 (QHGQGARKAG…PPASTPGDQR (85 aa)) is disordered. Residues 113 to 122 (PAASQAAATA) are compositionally biased toward low complexity. Polar residues predominate over residues 153 to 165 (EQQPPASTPGDQR). The residue at position 175 (S175) is a Phosphoserine. Disordered stretches follow at residues 340–359 (FNID…SLPM), 369–506 (SPGL…GSGQ), 531–630 (QQKP…QQQQ), 658–680 (QQQQ…QPLL), 705–743 (YQVS…GYMN), 784–820 (IAPQ…YSGG), and 1059–1100 (LPNL…FQGT). 4 stretches are compositionally biased toward polar residues: residues 344-354 (LGQQSQRSTPR), 371-380 (GLTQGPSGSP), 393-419 (MANS…TGSG), and 428-437 (QEVSHAQQLK). The span at 440–470 (AANRQQHARMQQHQQQHQPTNWSALPSSAGP) shows a compositional bias: low complexity. Polar residues-rich tracts occupy residues 484–496 (SFGQ…QSSP), 532–543 (QKPQDLSRSFIN), and 563–587 (NSDQ…LHYT). The segment covering 588–630 (QQQQQQQQQQQQQQQQQQQQQQQQQQQQQQQQQQSSISAQQQQ) has biased composition (low complexity). 2 stretches are compositionally biased toward low complexity: residues 706–725 (QVSQ…NTGP) and 733–743 (SNPNTGSGYMN). The span at 807–820 (NVGNMQPTAQYSGG) shows a compositional bias: polar residues.

It belongs to the mastermind family. In terms of assembly, interacts through its N-terminal region with the ankyrin repeat region of the Notch proteins NOTCH1, NOTCH2, NOTCH3 and NOTCH4. Forms a DNA-binding complex with Notch proteins and RBPSUH/RBP-J kappa. As to expression, widely expressed with high levels detected in placenta, salivary gland and skeletal muscle.

The protein resides in the nucleus speckle. In terms of biological role, acts as a transcriptional coactivator for NOTCH proteins. Has been shown to amplify NOTCH-induced transcription of HES1. Potentiates activation by NOTCH3 and NOTCH4 more efficiently than MAML1 or MAML3. This is Mastermind-like protein 2 (MAML2) from Homo sapiens (Human).